The primary structure comprises 327 residues: Probable cell division protein WhiA (327 aa).

Positions serine 275–arginine 308 form a DNA-binding region, H-T-H motif.

Belongs to the WhiA family.

Functionally, involved in cell division and chromosome segregation. This Nocardia farcinica (strain IFM 10152) protein is Probable cell division protein WhiA.